A 508-amino-acid polypeptide reads, in one-letter code: Bifunctional purine biosynthesis protein PurH (508 aa).

An MGS-like domain is found at 1–145; that stretch reads MIKRALLSTY…KNYKDVIVVV (145 aa).

This sequence belongs to the PurH family.

It catalyses the reaction (6R)-10-formyltetrahydrofolate + 5-amino-1-(5-phospho-beta-D-ribosyl)imidazole-4-carboxamide = 5-formamido-1-(5-phospho-D-ribosyl)imidazole-4-carboxamide + (6S)-5,6,7,8-tetrahydrofolate. The catalysed reaction is IMP + H2O = 5-formamido-1-(5-phospho-D-ribosyl)imidazole-4-carboxamide. The protein operates within purine metabolism; IMP biosynthesis via de novo pathway; 5-formamido-1-(5-phospho-D-ribosyl)imidazole-4-carboxamide from 5-amino-1-(5-phospho-D-ribosyl)imidazole-4-carboxamide (10-formyl THF route): step 1/1. It functions in the pathway purine metabolism; IMP biosynthesis via de novo pathway; IMP from 5-formamido-1-(5-phospho-D-ribosyl)imidazole-4-carboxamide: step 1/1. The protein is Bifunctional purine biosynthesis protein PurH of Petrotoga mobilis (strain DSM 10674 / SJ95).